Reading from the N-terminus, the 493-residue chain is MSELTSLTIAEAREKLVSKDITAVELTDAYLGAIEAANGAINAYVTVTPEIARDMAKASDARLATGKAGALEGIPLGVKDLFATRDVHTQACSNILDGFKPKYESTVTQNLWNEGAVMLGKLNMDEFAMGSSNENSFYGPVVNPWRATGSEEKLVPGGSSGGSAAAVAARLCAGATASDTGGSIRQPAAFTGTVGIKPTYGRCSRWGIVAYASSLDQAGPIARDVRDAAILLKSMASIDEKDTTSVDLLAPNYEAAIGQSVKGMKIGIPREYRVDGMPEEIEALWQKGMAWLKEAGAEIVDISLPHTKYALPAYYIVASAEASSNLARYDGVRYGLRVDGKDIADMYEKSRAAGFGKEVQRRILMGTYVLSAGYYDAYYLRAQKVRTLIKRDFEQVFAAGVDAILTPITPSSAFAIGDKDLAADPVKMYLNDIFSVTLNMAGLPGLSVPAGLDAKGLPLGLQLIGKPFEEETLFKTAHVIEQAAGKFTPAQWW.

Residues K79 and S159 each act as charge relay system in the active site. The Acyl-ester intermediate role is filled by S183.

It belongs to the amidase family. GatA subfamily. As to quaternary structure, heterotrimer of A, B and C subunits.

The enzyme catalyses L-glutamyl-tRNA(Gln) + L-glutamine + ATP + H2O = L-glutaminyl-tRNA(Gln) + L-glutamate + ADP + phosphate + H(+). Allows the formation of correctly charged Gln-tRNA(Gln) through the transamidation of misacylated Glu-tRNA(Gln) in organisms which lack glutaminyl-tRNA synthetase. The reaction takes place in the presence of glutamine and ATP through an activated gamma-phospho-Glu-tRNA(Gln). In Allorhizobium ampelinum (strain ATCC BAA-846 / DSM 112012 / S4) (Agrobacterium vitis (strain S4)), this protein is Glutamyl-tRNA(Gln) amidotransferase subunit A.